A 371-amino-acid chain; its full sequence is uncharacterized protein (371 aa).

His-76 is a binding site for Zn(2+). Asp-78 is an active-site residue. A Zn(2+)-binding site is contributed by Asp-106. The active-site Proton acceptor is the Glu-139. Residues Glu-140, Asp-163, and His-344 each coordinate Zn(2+).

It belongs to the peptidase M20A family. Requires Zn(2+) as cofactor.

Its function is as follows. Could be a peptidase. This is an uncharacterized protein from Bacillus subtilis (strain 168).